A 184-amino-acid polypeptide reads, in one-letter code: dITP/XTP pyrophosphatase (184 aa).

5-10 (SSNRHK) is a substrate binding site. 2 residues coordinate Mg(2+): Glu-33 and Asp-62. Catalysis depends on Asp-62, which acts as the Proton acceptor. Substrate contacts are provided by residues Ser-63, 136-139 (WGFD), Lys-158, and 163-164 (HR).

Belongs to the HAM1 NTPase family. Homodimer. Requires Mg(2+) as cofactor.

The catalysed reaction is XTP + H2O = XMP + diphosphate + H(+). It catalyses the reaction dITP + H2O = dIMP + diphosphate + H(+). The enzyme catalyses ITP + H2O = IMP + diphosphate + H(+). In terms of biological role, pyrophosphatase that catalyzes the hydrolysis of nucleoside triphosphates to their monophosphate derivatives, with a high preference for the non-canonical purine nucleotides XTP (xanthosine triphosphate), dITP (deoxyinosine triphosphate) and ITP. Seems to function as a house-cleaning enzyme that removes non-canonical purine nucleotides from the nucleotide pool, thus preventing their incorporation into DNA/RNA and avoiding chromosomal lesions. The sequence is that of dITP/XTP pyrophosphatase from Korarchaeum cryptofilum (strain OPF8).